The primary structure comprises 227 residues: General transcription factor 3C polypeptide 6 (227 aa).

The tract at residues 157-227 (DEAAGPASDK…DGNVSQNNQS (71 aa)) is disordered. A compositionally biased stretch (basic and acidic residues) spans 186–195 (EQEKVEHSEV). A compositionally biased stretch (polar residues) spans 203–227 (ETPSEMESSVFMGTQDGNVSQNNQS).

This sequence belongs to the TFIIIC subunit 6 family. In terms of assembly, part of the TFIIIC subcomplex TFIIIC2, consisting of six subunits, GTF3C1, GTF3C2, GTF3C3, GTF3C4, GTF3C5 and GTF3C6. Interacts with GTF3C4 and GTF3C5.

Its subcellular location is the nucleus. Its function is as follows. Involved in RNA polymerase III-mediated transcription. Integral, tightly associated component of the DNA-binding TFIIIC2 subcomplex that directly binds tRNA and virus-associated RNA promoters. In Mus musculus (Mouse), this protein is General transcription factor 3C polypeptide 6.